A 132-amino-acid chain; its full sequence is Small ribosomal subunit protein bS16 (132 aa).

Residues 82-107 (DSKVQSKKEHNANKVKKEVKKPEAKK) are compositionally biased toward basic and acidic residues. The tract at residues 82–132 (DSKVQSKKEHNANKVKKEVKKPEAKKAAASKPASKPSASKSASQKKTVSKK) is disordered. A compositionally biased stretch (low complexity) spans 108–132 (AAASKPASKPSASKSASQKKTVSKK).

It belongs to the bacterial ribosomal protein bS16 family.

The protein is Small ribosomal subunit protein bS16 of Malacoplasma penetrans (strain HF-2) (Mycoplasma penetrans).